The primary structure comprises 258 residues: UPF0246 protein YaaA (258 aa).

It belongs to the UPF0246 family.

This chain is UPF0246 protein YaaA, found in Escherichia coli (strain UTI89 / UPEC).